Here is a 340-residue protein sequence, read N- to C-terminus: GTP 3',8-cyclase (340 aa).

Residues 8–227 enclose the Radical SAM core domain; it reads KLGRPIRDLR…TMIEQHFEID (220 aa). Position 17 (arginine 17) interacts with GTP. [4Fe-4S] cluster contacts are provided by cysteine 24 and cysteine 28. Tyrosine 30 provides a ligand contact to S-adenosyl-L-methionine. Cysteine 31 contacts [4Fe-4S] cluster. A GTP-binding site is contributed by arginine 71. Glycine 75 is an S-adenosyl-L-methionine binding site. Threonine 102 provides a ligand contact to GTP. Serine 126 provides a ligand contact to S-adenosyl-L-methionine. A GTP-binding site is contributed by lysine 163. Methionine 197 contacts S-adenosyl-L-methionine. [4Fe-4S] cluster-binding residues include cysteine 261 and cysteine 264. 266-268 contacts GTP; sequence RAR. Cysteine 278 serves as a coordination point for [4Fe-4S] cluster.

Belongs to the radical SAM superfamily. MoaA family. As to quaternary structure, monomer and homodimer. [4Fe-4S] cluster is required as a cofactor.

It catalyses the reaction GTP + AH2 + S-adenosyl-L-methionine = (8S)-3',8-cyclo-7,8-dihydroguanosine 5'-triphosphate + 5'-deoxyadenosine + L-methionine + A + H(+). Its pathway is cofactor biosynthesis; molybdopterin biosynthesis. Functionally, catalyzes the cyclization of GTP to (8S)-3',8-cyclo-7,8-dihydroguanosine 5'-triphosphate. The polypeptide is GTP 3',8-cyclase (Staphylococcus aureus (strain USA300)).